The chain runs to 185 residues: Elongation factor P (185 aa).

This sequence belongs to the elongation factor P family.

The protein localises to the cytoplasm. Its pathway is protein biosynthesis; polypeptide chain elongation. Its function is as follows. Involved in peptide bond synthesis. Stimulates efficient translation and peptide-bond synthesis on native or reconstituted 70S ribosomes in vitro. Probably functions indirectly by altering the affinity of the ribosome for aminoacyl-tRNA, thus increasing their reactivity as acceptors for peptidyl transferase. The sequence is that of Elongation factor P from Streptococcus equi subsp. equi (strain 4047).